Here is a 361-residue protein sequence, read N- to C-terminus: Flagellar P-ring protein (361 aa).

The signal sequence occupies residues 1-18 (MRKFTILLMLLLASSAQA).

The protein belongs to the FlgI family. As to quaternary structure, the basal body constitutes a major portion of the flagellar organelle and consists of four rings (L,P,S, and M) mounted on a central rod.

The protein localises to the periplasm. It is found in the bacterial flagellum basal body. In terms of biological role, assembles around the rod to form the L-ring and probably protects the motor/basal body from shearing forces during rotation. The sequence is that of Flagellar P-ring protein from Vibrio cholerae serotype O1 (strain ATCC 39541 / Classical Ogawa 395 / O395).